Here is a 632-residue protein sequence, read N- to C-terminus: Deoxynucleoside triphosphate triphosphohydrolase SAMHD1 (632 aa).

Residues 1–22 are disordered; that stretch reads MKGINGAKRVRHDASPSAQDGY. The SAM domain maps to 44–107; it reads WDVEEVCLFL…LSCLRMLCQN (64 aa). Positions 113 and 114 each coordinate GTP. Residue Asn116 coordinates dGTP. Positions 134, 139, and 142 each coordinate GTP. Gln146, Leu147, Val153, and Arg161 together coordinate dGTP. Gln146 contributes to the dATP binding site. Gln146 serves as a coordination point for dCTP. Gln146 contacts dTTP. Position 161 (Arg161) interacts with dATP. Arg161 lines the dCTP pocket. Arg161 contacts dTTP. Positions 161–321 constitute an HD domain; that stretch reads RFEHSIGVGY…GIDVDKWDYF (161 aa). The Mn(2+) site is built by His164, His203, and Asp204. Residues His207 and His212 each coordinate dATP. Residues His207 and His212 each contribute to the dCTP site. Residues His207 and His212 each coordinate dTTP. His230 is a catalytic residue. Mn(2+) is bound at residue Asp316. Residues Lys317, Tyr320, Asp324, Arg338, Arg357, Lys359, Asn363, Arg371, Tyr379, Gln380, His381, and Lys382 each contribute to the dGTP site. Positions 317, 320, and 324 each coordinate dATP. Residues Lys317, Tyr320, and Asp324 each coordinate dCTP. The dTTP site is built by Lys317, Tyr320, and Asp324. Position 371 (Arg371) interacts with dATP. Arg371 is a binding site for dCTP. Gln380 contacts dATP. DCTP is bound at residue Gln380. Residue Gln380 coordinates dTTP. 3 residues coordinate GTP: Arg456, Lys460, and Lys529. Lys529 is a binding site for dGTP.

Belongs to the SAMHD1 family. Homodimer; in absence of GTP and dNTP. Homotetramer; in GTP- and dNTP-bound form. Interacts with rbbp8/CtIP. It depends on Zn(2+) as a cofactor.

The protein resides in the nucleus. Its subcellular location is the chromosome. It catalyses the reaction a 2'-deoxyribonucleoside 5'-triphosphate + H2O = a 2'-deoxyribonucleoside + triphosphate + H(+). The enzyme catalyses dATP + H2O = 2'-deoxyadenosine + triphosphate + H(+). It carries out the reaction dCTP + H2O = 2'-deoxycytidine + triphosphate + H(+). The catalysed reaction is dGTP + H2O = 2'-deoxyguanosine + triphosphate + H(+). It catalyses the reaction dTTP + H2O = thymidine + triphosphate + H(+). Allosterically activated and regulated via the combined actions of GTP and dNTPs (dATP, dGTP, dTTP and dCTP): Allosteric site 1 binds GTP, while allosteric site 2 binds dNTP. Allosteric activation promotes the formation of highly active homotetramers. In terms of biological role, protein that acts both as a host restriction factor involved in defense response to virus and as a regulator of DNA end resection at stalled replication forks. Has deoxynucleoside triphosphate (dNTPase) activity, which is required to restrict infection by viruses: dNTPase activity reduces cellular dNTP levels to levels too low for retroviral reverse transcription to occur, blocking early-stage virus replication in dendritic and other myeloid cells. Functions during S phase at stalled DNA replication forks to promote the resection of gapped or reversed forks: acts by stimulating the exonuclease activity of mre11, activating the ATR-CHK1 pathway and allowing the forks to restart replication. Ability to promote DNA end resection at stalled replication forks is independent of dNTPase activity. The sequence is that of Deoxynucleoside triphosphate triphosphohydrolase SAMHD1 from Xenopus laevis (African clawed frog).